Here is a 1258-residue protein sequence, read N- to C-terminus: MITSELPVLQDSTNETTAHSDAGSELEETEVKGKRKRGRPGRPPSTNKKPRKSPGEKSRIEAGIRGAGRGRANGHPQQNGEGEPVTLFEVVKLGKSAMQSVVDDWIESYKQDRDIALLDLINFFIQCSGCRGTVRIEMFRNMQNAEIIRKMTEEFDEDSGDYPLTMPGPQWKKFRSNFCEFIGVLIRQCQYSIIYDEYMMDTVISLLTGLSDSQVRAFRHTSTLAAMKLMTALVNVALNLSIHQDNTQRQYEAERNKMIGKRANERLELLLQKRKELQENQDEIENMMNSIFKGIFVHRYRDAIAEIRAICIEEIGVWMKMYSDAFLNDSYLKYVGWTLHDRQGEVRLKCLKALQSLYTNRELFPKLELFTNRFKDRIVSMTLDKEYDVAVEAIRLVTLILHGSEEALSNEDCENVYHLVYSAHRPVAVAAGEFLHKKLFSRHDPQAEEALAKRRGRNSPNGNLIRMLVLFFLESELHEHAAYLVDSLWESSQELLKDWECMTELLLEEPVQGEEAMSDRQESALIELMVCTIRQAAEAHPPVGRGTGKRVLTAKERKTQIDDRNKLTEHFIITLPMLLSKYSADAEKVANLLQIPQYFDLEIYSTGRMEKHLDALLKQIKFVVEKHVESDVLEACSKTYSILCSEEYTIQNRVDIARSQLIDEFVDRFNHSVEDLLQEGEEADDDDIYNVLSTLKRLTSFHNAHDLTKWDLFGNCYRLLKTGIEHGAMPEQIVVQALQCSHYSILWQLVKITDGSPSKEDLLVLRKTVKSFLAVCQQCLSNVNTPVKEQAFMLLCDLLMIFSHQLMTGGREGLQPLVFNPDTGLQSELLSFVMDHVFIDQDEENQSMEGDEEDEANKIEALHKRRNLLAAFSKLIIYDIVDMHAAADIFKHYMKYYNDYGDIIKETLSKTRQIDKIQCAKTLILSLQQLFNELVQEQGPNLDRTSAHVSGIKELARRFALTFGLDQIKTREAVATLHKDGIEFAFKYQNQKGQEYPPPNLAFLEVLSEFSSKLLRQDKKTVHSYLEKFLTEQMMERREDVWLPLISYRNSLVTGGEDDRMSVNSGSSSSKTSSVRNKKGRPPLHKKRVEDESLDNTWLNRTDTMIQTPGPLPAPQLTSTVLRENSRPMGDQIQEPESEHGSEPDFLHNPQMQISWLGQPKLEDLNRKDRTGMNYMKVRTGVRHAVRGLMEEDAEPIFEDVMMSSRSQLEDMNEEFEDTMVIDLPPSRNRRERAELRPDFFDSAAIIEDDSGFGMPMF.

The segment at M1–P84 is disordered. Positions Q10 to H19 are enriched in polar residues. S24 is modified (phosphoserine). Over residues S53–A62 the composition is skewed to basic and acidic residues. In terms of domain architecture, SCD spans F296–M381. Phosphoserine occurs at positions 756, 1062, and 1065. Disordered stretches follow at residues G1055–N1096 and M1129–H1148. Low complexity predominate over residues S1062–S1074. The segment covering R1076–K1087 has biased composition (basic residues). S1093 carries the phosphoserine modification. The span at E1137–F1146 shows a compositional bias: basic and acidic residues. K1161 participates in a covalent cross-link: Glycyl lysine isopeptide (Lys-Gly) (interchain with G-Cter in SUMO2).

Belongs to the SCC3 family. Cohesin complexes are composed of a heterodimer between a SMC1 protein (SMC1A or SMC1B) and SMC3, which are attached via their hinge domain, and RAD21 which link them at their heads, and one STAG protein (STAG1, STAG2 or STAG3). In cohesin complexes, STAG1 is mutually exclusive with STAG2 and STAG3. Interacts directly with RAD21 in cohesin complex. The cohesin complex interacts with the cohesin loading complex subunits NIPBL/Scc2 (via HEAT repeats) and MAU2/Scc4. NIPBL directly contacts all members of the complex, RAD21, SMC1A/B, SMC3 and STAG1. Phosphorylated by PLK1. The large dissociation of cohesin from chromosome arms during prophase is partly due to its phosphorylation.

It localises to the nucleus. The protein localises to the chromosome. Its subcellular location is the centromere. Component of cohesin complex, a complex required for the cohesion of sister chromatids after DNA replication. The cohesin complex apparently forms a large proteinaceous ring within which sister chromatids can be trapped. At anaphase, the complex is cleaved and dissociates from chromatin, allowing sister chromatids to segregate. The cohesin complex may also play a role in spindle pole assembly during mitosis. This chain is Cohesin subunit SA-1 (STAG1), found in Homo sapiens (Human).